A 647-amino-acid polypeptide reads, in one-letter code: Phosphatidylinositol polyphosphate 5-phosphatase type IV (647 aa).

Disordered stretches follow at residues 1 to 80 (MPSK…QPPI), 101 to 131 (RGSQ…PAYS), and 177 to 196 (HRDA…HASH). Repeat unit 1 spans residues 52–55 (PMPP). The segment at 52–243 (PMPPFSIPAK…AHSNLGPSRP (192 aa)) is 3 X 4 AA repeats of P-X-X-P. The span at 60–75 (AKTSNQNPQTKANLIT) shows a compositional bias: polar residues. The stretch at 76–79 (PQPP) is repeat 2. The residue at position 103 (S103) is a Phosphoserine. Polar residues predominate over residues 120–129 (LQDSVAQSPA). Position 197 is a phosphothreonine (T197). The stretch at 240–243 (PSRP) is repeat 3. 2 positions are modified to phosphoserine: S245 and S259. At C644 the chain carries Cysteine methyl ester. C644 carries S-farnesyl cysteine lipidation. The propeptide at 645–647 (TVS) is removed in mature form.

This sequence belongs to the inositol polyphosphate 5-phosphatase family. As to quaternary structure, interacts (when prenylated) with PDE6D; this is important for normal location in cilia. Highly expressed in testis, in pachytene and diplotene spermatocytes, but not in more mature elongating spermatids. Detected in neurons throughout the brain.

Its subcellular location is the cytoplasm. The protein localises to the cytoskeleton. It localises to the cilium axoneme. It is found in the golgi apparatus. The protein resides in the golgi stack membrane. Its subcellular location is the cell projection. The protein localises to the ruffle. It localises to the cell membrane. It is found in the nucleus. The enzyme catalyses a 1,2-diacyl-sn-glycero-3-phospho-(1D-myo-inositol-4,5-bisphosphate) + H2O = a 1,2-diacyl-sn-glycero-3-phospho-(1D-myo-inositol 4-phosphate) + phosphate. The catalysed reaction is a 1,2-diacyl-sn-glycero-3-phospho-(1D-myo-inositol-3,4,5-trisphosphate) + H2O = a 1,2-diacyl-sn-glycero-3-phospho-(1D-myo-inositol-3,4-bisphosphate) + phosphate. It catalyses the reaction a 1,2-diacyl-sn-glycero-3-phospho-(1D-myo-inositol-3,5-bisphosphate) + H2O = a 1,2-diacyl-sn-glycero-3-phospho-(1D-myo-inositol-3-phosphate) + phosphate. Phosphatidylinositol (PtdIns) phosphatase that specifically hydrolyzes the 5-phosphate of phosphatidylinositol-3,4,5-trisphosphate (PtdIns(3,4,5)P3), phosphatidylinositol 4,5-bisphosphate (PtdIns(4,5)P2) and phosphatidylinositol 3,5-bisphosphate (PtdIns(3,5)P2). Specific for lipid substrates, inactive towards water soluble inositol phosphates. Specific for lipid substrates, inactive towards water soluble inositol phosphates. Plays an essential role in the primary cilium by controlling ciliary growth and phosphoinositide 3-kinase (PI3K) signaling and stability. This chain is Phosphatidylinositol polyphosphate 5-phosphatase type IV (Inpp5e), found in Mus musculus (Mouse).